A 275-amino-acid chain; its full sequence is Catechol 1,2-dioxygenase 2 (275 aa).

4 residues coordinate Fe cation: Y158, Y192, H216, and H218.

Belongs to the intradiol ring-cleavage dioxygenase family. As to quaternary structure, homodimer. It depends on Fe(3+) as a cofactor.

The enzyme catalyses catechol + O2 = cis,cis-muconate + 2 H(+). It functions in the pathway aromatic compound metabolism; beta-ketoadipate pathway; 5-oxo-4,5-dihydro-2-furylacetate from catechol: step 1/3. Functionally, can cleave 4-methyl-, 4-chloro-, and 3-methoxycatechol at lower rates than catechol, but has no activity with 4-nitrocatechol or protocatechuic acid. The polypeptide is Catechol 1,2-dioxygenase 2 (catA2) (Acinetobacter lwoffii).